The sequence spans 356 residues: Phenylalanine--tRNA ligase alpha subunit (356 aa).

Residue glutamate 258 coordinates Mg(2+).

It belongs to the class-II aminoacyl-tRNA synthetase family. Phe-tRNA synthetase alpha subunit type 1 subfamily. In terms of assembly, tetramer of two alpha and two beta subunits. Mg(2+) serves as cofactor.

The protein resides in the cytoplasm. The enzyme catalyses tRNA(Phe) + L-phenylalanine + ATP = L-phenylalanyl-tRNA(Phe) + AMP + diphosphate + H(+). This chain is Phenylalanine--tRNA ligase alpha subunit, found in Macrococcus caseolyticus (strain JCSC5402) (Macrococcoides caseolyticum).